A 348-amino-acid chain; its full sequence is Dihydroorotase (348 aa).

Zn(2+) is bound by residues H14 and H16. Substrate-binding positions include 16–18 and N42; that span reads HLR. 3 residues coordinate Zn(2+): K100, H137, and H175. Position 100 is an N6-carboxylysine (K100). Residue H137 coordinates substrate. Residue L220 participates in substrate binding. D248 contributes to the Zn(2+) binding site. D248 is a catalytic residue. 2 residues coordinate substrate: H252 and A264.

This sequence belongs to the metallo-dependent hydrolases superfamily. DHOase family. Class II DHOase subfamily. In terms of assembly, homodimer. Requires Zn(2+) as cofactor.

The enzyme catalyses (S)-dihydroorotate + H2O = N-carbamoyl-L-aspartate + H(+). It functions in the pathway pyrimidine metabolism; UMP biosynthesis via de novo pathway; (S)-dihydroorotate from bicarbonate: step 3/3. Catalyzes the reversible cyclization of carbamoyl aspartate to dihydroorotate. The protein is Dihydroorotase of Pseudomonas fluorescens (strain ATCC BAA-477 / NRRL B-23932 / Pf-5).